The sequence spans 20 residues: Cytochrome c oxidase subunit 5A-1, mitochondrial (20 aa).

It belongs to the cytochrome c oxidase subunit 5A family. As to quaternary structure, component of the cytochrome c oxidase (complex IV, CIV), a multisubunit enzyme composed of 14 subunits. The complex is composed of a catalytic core of 3 subunits MT-CO1, MT-CO2 and MT-CO3, encoded in the mitochondrial DNA, and 11 supernumerary subunits COX4I, COX5A, COX5B, COX6A, COX6B, COX6C, COX7A, COX7B, COX7C, COX8 and NDUFA4, which are encoded in the nuclear genome. The complex exists as a monomer or a dimer and forms supercomplexes (SCs) in the inner mitochondrial membrane with NADH-ubiquinone oxidoreductase (complex I, CI) and ubiquinol-cytochrome c oxidoreductase (cytochrome b-c1 complex, complex III, CIII), resulting in different assemblies (supercomplex SCI(1)III(2)IV(1) and megacomplex MCI(2)III(2)IV(2)). Interacts with AFG1L. Interacts with RAB5IF.

The protein resides in the mitochondrion inner membrane. It functions in the pathway energy metabolism; oxidative phosphorylation. Component of the cytochrome c oxidase, the last enzyme in the mitochondrial electron transport chain which drives oxidative phosphorylation. The respiratory chain contains 3 multisubunit complexes succinate dehydrogenase (complex II, CII), ubiquinol-cytochrome c oxidoreductase (cytochrome b-c1 complex, complex III, CIII) and cytochrome c oxidase (complex IV, CIV), that cooperate to transfer electrons derived from NADH and succinate to molecular oxygen, creating an electrochemical gradient over the inner membrane that drives transmembrane transport and the ATP synthase. Cytochrome c oxidase is the component of the respiratory chain that catalyzes the reduction of oxygen to water. Electrons originating from reduced cytochrome c in the intermembrane space (IMS) are transferred via the dinuclear copper A center (CU(A)) of subunit 2 and heme A of subunit 1 to the active site in subunit 1, a binuclear center (BNC) formed by heme A3 and copper B (CU(B)). The BNC reduces molecular oxygen to 2 water molecules using 4 electrons from cytochrome c in the IMS and 4 protons from the mitochondrial matrix. The chain is Cytochrome c oxidase subunit 5A-1, mitochondrial from Thunnus obesus (Bigeye tuna).